Reading from the N-terminus, the 405-residue chain is 4-hydroxy-3-methylbut-2-en-1-yl diphosphate synthase (flavodoxin) (405 aa).

C297, C300, C343, and E350 together coordinate [4Fe-4S] cluster.

This sequence belongs to the IspG family. The cofactor is [4Fe-4S] cluster.

It carries out the reaction (2E)-4-hydroxy-3-methylbut-2-enyl diphosphate + oxidized [flavodoxin] + H2O + 2 H(+) = 2-C-methyl-D-erythritol 2,4-cyclic diphosphate + reduced [flavodoxin]. It functions in the pathway isoprenoid biosynthesis; isopentenyl diphosphate biosynthesis via DXP pathway; isopentenyl diphosphate from 1-deoxy-D-xylulose 5-phosphate: step 5/6. Converts 2C-methyl-D-erythritol 2,4-cyclodiphosphate (ME-2,4cPP) into 1-hydroxy-2-methyl-2-(E)-butenyl 4-diphosphate. The chain is 4-hydroxy-3-methylbut-2-en-1-yl diphosphate synthase (flavodoxin) from Francisella tularensis subsp. novicida (strain U112).